Reading from the N-terminus, the 200-residue chain is Cuticle protein 19.8 (200 aa).

A run of 3 repeats spans residues 20 to 23 (AAPA), 26 to 29 (AAPA), and 43 to 46 (AAPA). A Chitin-binding type R&amp;R domain is found at 56–127 (HPQYSYGYSV…EPGVHAPIAA (72 aa)). The disordered stretch occupies residues 70–89 (TGDSKSQQESRDGDVVQGSY). 5 tandem repeats follow at residues 126-129 (AAPV), 144-147 (AAPA), 150-153 (AAPV), 159-162 (AAPA), and 177-180 (AAPA).

In terms of biological role, component of the cuticle of migratory locust which contains more than 100 different structural proteins. In Locusta migratoria (Migratory locust), this protein is Cuticle protein 19.8.